A 293-amino-acid chain; its full sequence is Foldase protein PrsA 2 (293 aa).

A signal peptide spans 1–20 (MKKKLILGLVMMMALFSLAA). The N-palmitoyl cysteine moiety is linked to residue cysteine 21. Residue cysteine 21 is the site of S-diacylglycerol cysteine attachment. Residues 135–226 (QPDITVSHIL…YGYHIIQMDK (92 aa)) enclose the PpiC domain.

It belongs to the PrsA family.

It is found in the cell membrane. The enzyme catalyses [protein]-peptidylproline (omega=180) = [protein]-peptidylproline (omega=0). Functionally, plays a major role in protein secretion by helping the post-translocational extracellular folding of several secreted proteins. The chain is Foldase protein PrsA 2 from Listeria monocytogenes serotype 4b (strain F2365).